Consider the following 493-residue polypeptide: Catalase A (493 aa).

The interval 1–24 (MKRKLTGLFGAPVSDRENSMTAGP) is disordered. Active-site residues include His-53 and Asn-126. A heme-binding site is contributed by Tyr-336.

This sequence belongs to the catalase family. Homodimer. The cofactor is heme.

The catalysed reaction is 2 H2O2 = O2 + 2 H2O. Decomposes hydrogen peroxide into water and oxygen; serves to protect cells from the toxic effects of hydrogen peroxide. In Staphylococcus xylosus, this protein is Catalase A (katA).